The primary structure comprises 816 residues: H(+)/Cl(-) exchange transporter 5 (816 aa).

The disordered stretch occupies residues 1-26 (MAMWQGAMDNRGFQQGSFSSFQNSSS). At 1-124 (MAMWQGAMDN…WALIHSVSDA (124 aa)) the chain is on the cytoplasmic side. The segment covering 12-25 (GFQQGSFSSFQNSS) has biased composition (low complexity). Transmembrane regions (helical) follow at residues 125–162 (FSGW…ICTG) and 208–231 (VNYF…VKVF). Positions 237–241 (GSGIP) match the Selectivity filter part_1 motif. Ser-238 contributes to the chloride binding site. The segment at residues 240-247 (IPEIKTIL) is an intramembrane region (helical). Transmembrane regions (helical) follow at residues 256-275 (LGKW…VSSG) and 281-300 (EGPL…HCFN). The short motif at 279–283 (GKEGP) is the Selectivity filter part_2 element. 2 intramembrane regions (helical) span residues 312-324 (VLSA…VSVA) and 328-336 (PIGGVLFSL). Transmembrane regions (helical) follow at residues 348–366 (LWRS…RSIN), 389–415 (LVPF…AWCR), 422–442 (LGKY…ILAF), 498–518 (MWQL…TFGM), and 523–542 (GLFI…LGVG). The short motif at 523-527 (GLFIP) is the Selectivity filter part_3 element. Phe-525 contacts chloride. The segment at residues 570 to 584 (GLYAMVGAAACLGGV) is an intramembrane region (helical). Positions 585–587 (TRM) form an intramembrane region, note=Loop between two helices. The helical intramembrane region spans 588–599 (TVSLVVIMFELT). The note=Loop between two helices intramembrane region spans 600–604 (GGLEY). Residues 605-622 (IVPLMAAAMTSKWVADAL) traverse the membrane as a helical segment. Over 623–816 (GREGIYDAHI…NQDPDSILFN (194 aa)) the chain is Cytoplasmic. Chloride is bound at residue Tyr-628. 2 consecutive CBS domains span residues 656 to 720 (MKPR…ARKK) and 752 to 812 (ILDL…DPDS). ATP-binding positions include Thr-666, 687-689 (YSG), and 794-797 (TKKD).

This sequence belongs to the chloride channel (TC 2.A.49) family. ClC-5/CLCN5 subfamily. In terms of assembly, interacts with NEDD4 and NEDD4L. In terms of processing, ubiquitinated by NEDD4L in the presence of albumin; which promotes endocytosis and proteasomal degradation. As to expression, kidney. Moderately expressed in aortic vascular smooth muscle and endothelial cells, and at a slightly higher level in the coronary vascular smooth muscle.

The protein localises to the golgi apparatus membrane. It localises to the endosome membrane. Its subcellular location is the cell membrane. The catalysed reaction is 2 chloride(in) + H(+)(out) = 2 chloride(out) + H(+)(in). Proton-coupled chloride transporter. Functions as antiport system and exchanges chloride ions against protons. Important for normal acidification of the endosome lumen. May play an important role in renal tubular function. The CLC channel family contains both chloride channels and proton-coupled anion transporters that exchange chloride or another anion for protons. The absence of conserved gating glutamate residues is typical for family members that function as channels. This chain is H(+)/Cl(-) exchange transporter 5, found in Homo sapiens (Human).